A 156-amino-acid polypeptide reads, in one-letter code: Small ribosomal subunit protein uS7 (156 aa).

The protein belongs to the universal ribosomal protein uS7 family. Part of the 30S ribosomal subunit. Contacts proteins S9 and S11.

One of the primary rRNA binding proteins, it binds directly to 16S rRNA where it nucleates assembly of the head domain of the 30S subunit. Is located at the subunit interface close to the decoding center, probably blocks exit of the E-site tRNA. The polypeptide is Small ribosomal subunit protein uS7 (Natranaerobius thermophilus (strain ATCC BAA-1301 / DSM 18059 / JW/NM-WN-LF)).